The primary structure comprises 340 residues: Glycerol-3-phosphate dehydrogenase [NAD(P)+] (340 aa).

Residues W11, R33, and K110 each contribute to the NADPH site. The sn-glycerol 3-phosphate site is built by K110, G144, and S146. Residue A148 coordinates NADPH. Sn-glycerol 3-phosphate-binding residues include K199, D252, S262, R263, and N264. K199 acts as the Proton acceptor in catalysis. R263 is an NADPH binding site. Positions 287 and 289 each coordinate NADPH.

The protein belongs to the NAD-dependent glycerol-3-phosphate dehydrogenase family.

Its subcellular location is the cytoplasm. The catalysed reaction is sn-glycerol 3-phosphate + NAD(+) = dihydroxyacetone phosphate + NADH + H(+). It carries out the reaction sn-glycerol 3-phosphate + NADP(+) = dihydroxyacetone phosphate + NADPH + H(+). The protein operates within membrane lipid metabolism; glycerophospholipid metabolism. Catalyzes the reduction of the glycolytic intermediate dihydroxyacetone phosphate (DHAP) to sn-glycerol 3-phosphate (G3P), the key precursor for phospholipid synthesis. This chain is Glycerol-3-phosphate dehydrogenase [NAD(P)+], found in Polynucleobacter asymbioticus (strain DSM 18221 / CIP 109841 / QLW-P1DMWA-1) (Polynucleobacter necessarius subsp. asymbioticus).